The following is a 206-amino-acid chain: FKBP-type 22 kDa peptidyl-prolyl cis-trans isomerase (206 aa).

The region spanning 120–206 is the PPIase FKBP-type domain; sequence TDRVRVHYTG…VFEVELLEIL (87 aa).

As to quaternary structure, homodimer.

It is found in the cytoplasm. The protein localises to the periplasm. It catalyses the reaction [protein]-peptidylproline (omega=180) = [protein]-peptidylproline (omega=0). With respect to regulation, strongly inhibited by FK506. In terms of biological role, PPIases accelerate the folding of proteins. Catalyzes the cis-trans isomerization of proline imidic peptide bonds in oligopeptides. Displays a preference for substrates with a lysyl residue in the P1 position. In Escherichia coli (strain K12), this protein is FKBP-type 22 kDa peptidyl-prolyl cis-trans isomerase (fklB).